Reading from the N-terminus, the 173-residue chain is Protein SUGARY ENHANCER 1 (173 aa).

Positions 1–31 (MIRPAPWVGAGHRGRGGEAGACTESLGSESG) are disordered.

Belongs to the fantastic four family.

Functionally, involved in starch metabolism in endosperm. Acts as a modifier of SUGARY1 (SU1), an isoamylase starch-debranching enzyme involved in amylopectin biosynthesis in endosperm. The polypeptide is Protein SUGARY ENHANCER 1 (Zea mays (Maize)).